Reading from the N-terminus, the 487-residue chain is Zinc finger and BTB domain-containing protein 32 (487 aa).

One can recognise a BTB domain in the interval 29-87 (CDTLITVGGQEFPAHSLVLAGVSQQLGRRGQWALGEGISPSTFAQLLNFVYGESVELQP). Positions 113–166 (RGDRAKKPDPGLKKHQEEPEKPSRNAERELGDPGEKQKPEQVSRTGGREQEMLH) are enriched in basic and acidic residues. 2 disordered regions span residues 113–208 (RGDR…ADGK) and 308–371 (QNQL…ARSR). The span at 308–320 (QNQLASSSPTPGS) shows a compositional bias: polar residues. A compositionally biased stretch (pro residues) spans 357 to 369 (PPRPHPPPAPPAR). 3 consecutive C2H2-type zinc fingers follow at residues 373-395 (YACS…YRVH), 401-423 (FSCS…LRTH), and 428-450 (YRXX…MRGH). The disordered stretch occupies residues 468–487 (SSSRPSRPSTSPCCPSSSTT).

Belongs to the krueppel C2H2-type zinc-finger protein family. As to quaternary structure, homodimer (via PTB domain). Interacts with the N-terminal of FANCC. Interacts with ZBTB16. Interacts with GATA3.

It is found in the nucleus. In terms of biological role, DNA-binding protein that binds to the to a 5'-TGTACAGTGT-3' core sequence. May function as a transcriptional transactivator and transcriptional repressor. Probably exerts its repressor effect by preventing GATA3 from binding to DNA. May play a role in regulating the differentiation and activation of helper T-cells. This Pan troglodytes (Chimpanzee) protein is Zinc finger and BTB domain-containing protein 32 (ZBTB32).